A 108-amino-acid chain; its full sequence is MTLGQQAEAHAQRYLEQQGLTFVERNVRYPFGEIDLIMRHKSHWVFVEVKYRSATQYGGALQALSAAQITRIRKAANHYLQLNRLDVPCRFDVIAMEADQIHWLVDAF.

Belongs to the UPF0102 family.

This is UPF0102 protein Sbal_4100 from Shewanella baltica (strain OS155 / ATCC BAA-1091).